Here is a 231-residue protein sequence, read N- to C-terminus: Lipoprotein-releasing system ATP-binding protein LolD (231 aa).

An ABC transporter domain is found at 6–231; sequence LKCQSVHKVY…VLAKVAPNSL (226 aa). ATP is bound at residue 42 to 49; sequence GASGSGKS.

Belongs to the ABC transporter superfamily. Lipoprotein translocase (TC 3.A.1.125) family. The complex is composed of two ATP-binding proteins (LolD) and two transmembrane proteins (LolC and LolE).

It localises to the cell inner membrane. Its function is as follows. Part of the ABC transporter complex LolCDE involved in the translocation of mature outer membrane-directed lipoproteins, from the inner membrane to the periplasmic chaperone, LolA. Responsible for the formation of the LolA-lipoprotein complex in an ATP-dependent manner. The sequence is that of Lipoprotein-releasing system ATP-binding protein LolD from Hahella chejuensis (strain KCTC 2396).